We begin with the raw amino-acid sequence, 322 residues long: N-acetyl-gamma-glutamyl-phosphate reductase (322 aa).

Residue cysteine 132 is part of the active site.

The protein belongs to the NAGSA dehydrogenase family. Type 1 subfamily.

It is found in the cytoplasm. It carries out the reaction N-acetyl-L-glutamate 5-semialdehyde + phosphate + NADP(+) = N-acetyl-L-glutamyl 5-phosphate + NADPH + H(+). It functions in the pathway amino-acid biosynthesis; L-arginine biosynthesis; N(2)-acetyl-L-ornithine from L-glutamate: step 3/4. In terms of biological role, catalyzes the NADPH-dependent reduction of N-acetyl-5-glutamyl phosphate to yield N-acetyl-L-glutamate 5-semialdehyde. The chain is N-acetyl-gamma-glutamyl-phosphate reductase from Phocaeicola vulgatus (strain ATCC 8482 / DSM 1447 / JCM 5826 / CCUG 4940 / NBRC 14291 / NCTC 11154) (Bacteroides vulgatus).